The following is a 364-amino-acid chain: MSTTLLSAFYDIDLLYKNEKALNNLALSTMLDKKAVGSPVSSTNSNLFPGFLRRHSATNLQALSGSTNLAKFCPNNNNNPLKDPAVSSTALLNRENKFRDRSFSENGERSQHLLHLQQQQQQQKAGAQVNSTRYKTELCRPFEENGACKYGEKCQFAHGFHELRSLTRHPKYKTELCRTFHTIGFCPYGPRCHFIHNAEERRQAPGAGERPKLHHSLSFSGFPNHSLDSPLLESPTSRTPPPQSSGSLYCQELLQLNNNNPCANNAFTFSGQELGLIAPLAIHTQNQSYCRQPCSSPPLSFQPLRRVSESPVFDAPPSPPDSLSDRDSYLSGSLSSGSLSGSDSPTLDSNRRLPIFSRLSISDD.

A compositionally biased stretch (basic and acidic residues) spans 102–111 (SFSENGERSQ). Residues 102–129 (SFSENGERSQHLLHLQQQQQQQKAGAQV) form a disordered region. Low complexity predominate over residues 113-123 (LLHLQQQQQQQ). The RNA-binding signature appears at 133 to 138 (RYKTEL). 2 C3H1-type zinc fingers span residues 133–161 (RYKT…HGFH) and 171–199 (KYKT…HNAE). Positions 150-191 (YGEKCQFAHGFHELRSLTRHPKYKTELCRTFHTIGFCPYGPR) are RNA-binding. The disordered stretch occupies residues 308-350 (SESPVFDAPPSPPDSLSDRDSYLSGSLSSGSLSGSDSPTLDSN). Low complexity predominate over residues 329–348 (YLSGSLSSGSLSGSDSPTLD).

Phosphorylated. Remains unlocalized in the egg and early embryo. From stage 21 (late neurula), expressed around the pronephros in the anterior crests, pharyngeal arch, hindbrain, mesodermal tissues around the pronephros and tail-bud. This expression pattern is maintained up to the tadpole stage.

Its subcellular location is the nucleus. The protein resides in the cytoplasm. Its function is as follows. Zinc-finger RNA-binding protein that destabilizes several cytoplasmic AU-rich element (ARE)-containing mRNA transcripts by promoting their poly(A) tail removal or deadenylation, and hence provide a mechanism for attenuating protein synthesis. Acts as a 3'-untranslated region (UTR) ARE mRNA-binding adapter protein to communicate signaling events to the mRNA decay machinery. Functions by recruiting the CCR4-NOT deadenylase complex and probably other components of the cytoplasmic RNA decay machinery to the bound ARE-containing mRNAs, and hence promotes ARE-mediated mRNA deadenylation and decay processes. Binds to 3'-UTR ARE of numerous mRNAs. Also induces the degradation of ARE-containing mRNAs even in absence of poly(A) tail. Required for tubulogenesis during pronephros development. The sequence is that of mRNA decay activator protein ZFP36L2-B (zfp36l2-B) from Xenopus laevis (African clawed frog).